Reading from the N-terminus, the 687-residue chain is Variant-specific surface protein VSP4A1 (687 aa).

Positions 1–14 (MLLTAFYVVLGSFA) are cleaved as a signal peptide. At 15-660 (APCQQDGDHI…SGLSTGAIAG (646 aa)) the chain is on the extracellular side. Residues 661 to 681 (ISVAAIVVVGGLVGFLCWWFI) traverse the membrane as a helical segment. Residues 682–687 (CRGKAQ) lie on the Cytoplasmic side of the membrane.

This sequence belongs to the Giardia variant surface protein family. Post-translationally, O-glycosylated. The major glycan is a trisaccharide with Glc at the reducing terminus. Palmitoylated.

It localises to the cell membrane. This is Variant-specific surface protein VSP4A1 from Giardia intestinalis (Giardia lamblia).